Reading from the N-terminus, the 191-residue chain is Elongation factor P (191 aa).

At Lys-34 the chain carries N6-(3,6-diaminohexanoyl)-5-hydroxylysine.

The protein belongs to the elongation factor P family. Post-translationally, may be beta-lysylated on the epsilon-amino group of Lys-34 by the combined action of EpmA and EpmB, and then hydroxylated on the C5 position of the same residue by EpmC (if this protein is present). Lysylation is critical for the stimulatory effect of EF-P on peptide-bond formation. The lysylation moiety may extend toward the peptidyltransferase center and stabilize the terminal 3-CCA end of the tRNA. Hydroxylation of the C5 position on Lys-34 may allow additional potential stabilizing hydrogen-bond interactions with the P-tRNA.

The protein resides in the cytoplasm. It functions in the pathway protein biosynthesis; polypeptide chain elongation. Its function is as follows. Involved in peptide bond synthesis. Alleviates ribosome stalling that occurs when 3 or more consecutive Pro residues or the sequence PPG is present in a protein, possibly by augmenting the peptidyl transferase activity of the ribosome. Modification of Lys-34 is required for alleviation. The chain is Elongation factor P from Marinomonas sp. (strain MWYL1).